A 954-amino-acid polypeptide reads, in one-letter code: Glycine dehydrogenase (decarboxylating) (954 aa).

Position 704 is an N6-(pyridoxal phosphate)lysine (Lys704).

Belongs to the GcvP family. The glycine cleavage system is composed of four proteins: P, T, L and H. It depends on pyridoxal 5'-phosphate as a cofactor.

The catalysed reaction is N(6)-[(R)-lipoyl]-L-lysyl-[glycine-cleavage complex H protein] + glycine + H(+) = N(6)-[(R)-S(8)-aminomethyldihydrolipoyl]-L-lysyl-[glycine-cleavage complex H protein] + CO2. In terms of biological role, the glycine cleavage system catalyzes the degradation of glycine. The P protein binds the alpha-amino group of glycine through its pyridoxal phosphate cofactor; CO(2) is released and the remaining methylamine moiety is then transferred to the lipoamide cofactor of the H protein. This Rhizobium etli (strain ATCC 51251 / DSM 11541 / JCM 21823 / NBRC 15573 / CFN 42) protein is Glycine dehydrogenase (decarboxylating).